The sequence spans 243 residues: DNA repair protein RecO (243 aa).

It belongs to the RecO family.

Involved in DNA repair and RecF pathway recombination. This chain is DNA repair protein RecO, found in Xylella fastidiosa (strain M12).